The primary structure comprises 368 residues: Chorismate synthase (368 aa).

Residue Arg-46 participates in NADP(+) binding. Residues 124–126 (RAS), Gly-284, 299–303 (KPTPS), and Arg-326 each bind FMN.

Belongs to the chorismate synthase family. FMNH2 serves as cofactor.

The catalysed reaction is 5-O-(1-carboxyvinyl)-3-phosphoshikimate = chorismate + phosphate. The protein operates within metabolic intermediate biosynthesis; chorismate biosynthesis; chorismate from D-erythrose 4-phosphate and phosphoenolpyruvate: step 7/7. Functionally, catalyzes the anti-1,4-elimination of the C-3 phosphate and the C-6 proR hydrogen from 5-enolpyruvylshikimate-3-phosphate (EPSP) to yield chorismate, which is the branch point compound that serves as the starting substrate for the three terminal pathways of aromatic amino acid biosynthesis. This reaction introduces a second double bond into the aromatic ring system. This is Chorismate synthase from Pyrobaculum aerophilum (strain ATCC 51768 / DSM 7523 / JCM 9630 / CIP 104966 / NBRC 100827 / IM2).